Reading from the N-terminus, the 545-residue chain is MTTNYIFVTGGVVSSLGKGIAAASLAAILEARGLKVTMMKLDPYINVDPGTMSPTQHGEVFVTEDGAETDLDLGHYERFIRTKMTKRNNFTAGRVYADVLRKERRGDYLGATIQVIPHITNAIKDRVIAGSEGHDIAIVEVGGTVGDIESLPFMEAIRQLAIEVGREHAMFMHLTLVPYLAAAGEVKTKPTQHSVKELLSIGIQPDILVCRSDRMIPANERKKIALFCNVPEKAVISMKDVDSIYKIPQLIRSQGLDDLVCARFGINAPEADLSEWEQVIYEEANPTGEVTIGMVGKYTELPDAYKSVNEALKHAGLKNRLSVTIKYVDSQDVETKGTDVLNGLDAILVPGGFGDRGIEGKIRAAQYARENKIPYLGICLGMQVALIEYARNVAGMEGAHSTEFNKNTKYPVVGLITEWVDGEGNVEERSEKSDLGGTMRLGSQLCHLEKGTKAYELYGSATIHERHRHRYEVNNLLRPQIEKAGLKVSGLSADKKLVEVIENPAHPWFVAAQFHPEFTSTPRDGHPLFAGFVKAAGQFQRGELK.

The interval 1 to 266 (MTTNYIFVTG…DDLVCARFGI (266 aa)) is amidoligase domain. Serine 14 lines the CTP pocket. Serine 14 serves as a coordination point for UTP. ATP-binding positions include 15-20 (SLGKGI) and aspartate 72. Aspartate 72 and glutamate 140 together coordinate Mg(2+). CTP is bound by residues 147–149 (DIE), 187–192 (KTKPTQ), and lysine 223. UTP contacts are provided by residues 187 to 192 (KTKPTQ) and lysine 223. 239–241 (KDV) is an ATP binding site. Residues 291–542 (TIGMVGKYTE…VKAAGQFQRG (252 aa)) form the Glutamine amidotransferase type-1 domain. Glycine 352 is a binding site for L-glutamine. Cysteine 379 functions as the Nucleophile; for glutamine hydrolysis in the catalytic mechanism. Residues 380-383 (LGMQ), glutamate 403, and arginine 470 contribute to the L-glutamine site. Active-site residues include histidine 515 and glutamate 517.

The protein belongs to the CTP synthase family. Homotetramer.

It catalyses the reaction UTP + L-glutamine + ATP + H2O = CTP + L-glutamate + ADP + phosphate + 2 H(+). The catalysed reaction is L-glutamine + H2O = L-glutamate + NH4(+). The enzyme catalyses UTP + NH4(+) + ATP = CTP + ADP + phosphate + 2 H(+). The protein operates within pyrimidine metabolism; CTP biosynthesis via de novo pathway; CTP from UDP: step 2/2. With respect to regulation, allosterically activated by GTP, when glutamine is the substrate; GTP has no effect on the reaction when ammonia is the substrate. The allosteric effector GTP functions by stabilizing the protein conformation that binds the tetrahedral intermediate(s) formed during glutamine hydrolysis. Inhibited by the product CTP, via allosteric rather than competitive inhibition. In terms of biological role, catalyzes the ATP-dependent amination of UTP to CTP with either L-glutamine or ammonia as the source of nitrogen. Regulates intracellular CTP levels through interactions with the four ribonucleotide triphosphates. In Vibrio cholerae serotype O1 (strain ATCC 39541 / Classical Ogawa 395 / O395), this protein is CTP synthase.